A 385-amino-acid chain; its full sequence is 8-amino-7-oxononanoate synthase (385 aa).

Residue R21 participates in substrate binding. 108–109 (GF) contributes to the pyridoxal 5'-phosphate binding site. H133 lines the substrate pocket. Residues S179, H207, and T233 each contribute to the pyridoxal 5'-phosphate site. The residue at position 236 (K236) is an N6-(pyridoxal phosphate)lysine. A substrate-binding site is contributed by T352.

Belongs to the class-II pyridoxal-phosphate-dependent aminotransferase family. BioF subfamily. In terms of assembly, homodimer. Pyridoxal 5'-phosphate serves as cofactor.

The enzyme catalyses 6-carboxyhexanoyl-[ACP] + L-alanine + H(+) = (8S)-8-amino-7-oxononanoate + holo-[ACP] + CO2. The protein operates within cofactor biosynthesis; biotin biosynthesis. Functionally, catalyzes the decarboxylative condensation of pimeloyl-[acyl-carrier protein] and L-alanine to produce 8-amino-7-oxononanoate (AON), [acyl-carrier protein], and carbon dioxide. The polypeptide is 8-amino-7-oxononanoate synthase (Salmonella enteritidis PT4 (strain P125109)).